The primary structure comprises 266 residues: Exosome complex component Rrp42 (266 aa).

The protein belongs to the RNase PH family. Rrp42 subfamily. In terms of assembly, component of the archaeal exosome complex. Forms a hexameric ring-like arrangement composed of 3 Rrp41-Rrp42 heterodimers. The hexameric ring associates with a trimer of Rrp4 and/or Csl4 subunits.

It is found in the cytoplasm. Its function is as follows. Non-catalytic component of the exosome, which is a complex involved in RNA degradation. Contributes to the structuring of the Rrp41 active site. The chain is Exosome complex component Rrp42 from Methanosarcina mazei (strain ATCC BAA-159 / DSM 3647 / Goe1 / Go1 / JCM 11833 / OCM 88) (Methanosarcina frisia).